The chain runs to 213 residues: ATP-dependent Clp protease proteolytic subunit (213 aa).

The active-site Nucleophile is serine 114. Residue histidine 139 is part of the active site.

The protein belongs to the peptidase S14 family. Fourteen ClpP subunits assemble into 2 heptameric rings which stack back to back to give a disk-like structure with a central cavity, resembling the structure of eukaryotic proteasomes.

It localises to the cytoplasm. The enzyme catalyses Hydrolysis of proteins to small peptides in the presence of ATP and magnesium. alpha-casein is the usual test substrate. In the absence of ATP, only oligopeptides shorter than five residues are hydrolyzed (such as succinyl-Leu-Tyr-|-NHMec, and Leu-Tyr-Leu-|-Tyr-Trp, in which cleavage of the -Tyr-|-Leu- and -Tyr-|-Trp bonds also occurs).. Cleaves peptides in various proteins in a process that requires ATP hydrolysis. Has a chymotrypsin-like activity. Plays a major role in the degradation of misfolded proteins. This chain is ATP-dependent Clp protease proteolytic subunit, found in Ectopseudomonas mendocina (strain ymp) (Pseudomonas mendocina).